A 118-amino-acid polypeptide reads, in one-letter code: Large ribosomal subunit protein bL20 (118 aa).

Belongs to the bacterial ribosomal protein bL20 family.

Functionally, binds directly to 23S ribosomal RNA and is necessary for the in vitro assembly process of the 50S ribosomal subunit. It is not involved in the protein synthesizing functions of that subunit. The sequence is that of Large ribosomal subunit protein bL20 from Yersinia enterocolitica serotype O:8 / biotype 1B (strain NCTC 13174 / 8081).